The primary structure comprises 428 residues: Adenylosuccinate synthetase (428 aa).

GTP-binding positions include 12 to 18 (GDEGKGK) and 40 to 42 (GHT). Asp-13 acts as the Proton acceptor in catalysis. Mg(2+) is bound by residues Asp-13 and Gly-40. IMP contacts are provided by residues 13–16 (DEGK), 38–41 (NAGH), Thr-133, Arg-147, Asn-224, Thr-239, and Arg-303. His-41 (proton donor) is an active-site residue. 299 to 305 (TTTGRRR) serves as a coordination point for substrate. GTP contacts are provided by residues Arg-305, 331 to 333 (KLD), and 413 to 415 (GVG).

This sequence belongs to the adenylosuccinate synthetase family. In terms of assembly, homodimer. Mg(2+) is required as a cofactor.

It localises to the cytoplasm. The enzyme catalyses IMP + L-aspartate + GTP = N(6)-(1,2-dicarboxyethyl)-AMP + GDP + phosphate + 2 H(+). The protein operates within purine metabolism; AMP biosynthesis via de novo pathway; AMP from IMP: step 1/2. Plays an important role in the de novo pathway and in the salvage pathway of purine nucleotide biosynthesis. Catalyzes the first committed step in the biosynthesis of AMP from IMP. This Coprinopsis cinerea (strain Okayama-7 / 130 / ATCC MYA-4618 / FGSC 9003) (Inky cap fungus) protein is Adenylosuccinate synthetase.